The following is a 152-amino-acid chain: Endoribonuclease YbeY (152 aa).

Positions 118, 122, and 128 each coordinate Zn(2+).

The protein belongs to the endoribonuclease YbeY family. Zn(2+) serves as cofactor.

The protein resides in the cytoplasm. In terms of biological role, single strand-specific metallo-endoribonuclease involved in late-stage 70S ribosome quality control and in maturation of the 3' terminus of the 16S rRNA. The chain is Endoribonuclease YbeY from Lacticaseibacillus paracasei (strain ATCC 334 / BCRC 17002 / CCUG 31169 / CIP 107868 / KCTC 3260 / NRRL B-441) (Lactobacillus paracasei).